A 227-amino-acid chain; its full sequence is NAD(P)H-hydrate epimerase (227 aa).

The YjeF N-terminal domain occupies 10-227 (MRALETAAFN…GKIMVQYIGL (218 aa)). A (6S)-NADPHX-binding site is contributed by 62-66 (NNGGD). 2 residues coordinate K(+): asparagine 63 and aspartate 142. (6S)-NADPHX contacts are provided by residues 146-152 (GIGLNRP) and aspartate 176. Position 179 (serine 179) interacts with K(+).

The protein belongs to the NnrE/AIBP family. K(+) is required as a cofactor.

It catalyses the reaction (6R)-NADHX = (6S)-NADHX. The catalysed reaction is (6R)-NADPHX = (6S)-NADPHX. Functionally, catalyzes the epimerization of the S- and R-forms of NAD(P)HX, a damaged form of NAD(P)H that is a result of enzymatic or heat-dependent hydration. This is a prerequisite for the S-specific NAD(P)H-hydrate dehydratase to allow the repair of both epimers of NAD(P)HX. The sequence is that of NAD(P)H-hydrate epimerase from Roseobacter litoralis (strain ATCC 49566 / DSM 6996 / JCM 21268 / NBRC 15278 / OCh 149).